We begin with the raw amino-acid sequence, 449 residues long: Signal recognition particle protein (449 aa).

Residues Gly109–Thr116, Asp191–Arg195, and Ser249–Asp252 each bind GTP.

It belongs to the GTP-binding SRP family. SRP54 subfamily. Part of the signal recognition particle protein translocation system, which is composed of SRP and FtsY. SRP is a ribonucleoprotein composed of Ffh and a 4.5S RNA molecule.

The protein localises to the cytoplasm. It catalyses the reaction GTP + H2O = GDP + phosphate + H(+). Its function is as follows. Involved in targeting and insertion of nascent membrane proteins into the cytoplasmic membrane. Binds to the hydrophobic signal sequence of the ribosome-nascent chain (RNC) as it emerges from the ribosomes. The SRP-RNC complex is then targeted to the cytoplasmic membrane where it interacts with the SRP receptor FtsY. Interaction with FtsY leads to the transfer of the RNC complex to the Sec translocase for insertion into the membrane, the hydrolysis of GTP by both Ffh and FtsY, and the dissociation of the SRP-FtsY complex into the individual components. The sequence is that of Signal recognition particle protein from Rickettsia conorii (strain ATCC VR-613 / Malish 7).